A 141-amino-acid polypeptide reads, in one-letter code: Large ribosomal subunit protein uL11 (141 aa).

This sequence belongs to the universal ribosomal protein uL11 family. In terms of assembly, part of the ribosomal stalk of the 50S ribosomal subunit. Interacts with L10 and the large rRNA to form the base of the stalk. L10 forms an elongated spine to which L12 dimers bind in a sequential fashion forming a multimeric L10(L12)X complex. One or more lysine residues are methylated.

In terms of biological role, forms part of the ribosomal stalk which helps the ribosome interact with GTP-bound translation factors. The polypeptide is Large ribosomal subunit protein uL11 (Chlamydia caviae (strain ATCC VR-813 / DSM 19441 / 03DC25 / GPIC) (Chlamydophila caviae)).